Consider the following 577-residue polypeptide: Arginine--tRNA ligase (577 aa).

The short motif at 122–132 (PNVAKEMHVGH) is the 'HIGH' region element.

Belongs to the class-I aminoacyl-tRNA synthetase family. Monomer.

The protein localises to the cytoplasm. The enzyme catalyses tRNA(Arg) + L-arginine + ATP = L-arginyl-tRNA(Arg) + AMP + diphosphate. The protein is Arginine--tRNA ligase of Salmonella newport (strain SL254).